Here is a 445-residue protein sequence, read N- to C-terminus: Probable D-serine dehydratase (445 aa).

K116 is modified (N6-(pyridoxal phosphate)lysine).

The protein belongs to the serine/threonine dehydratase family. DsdA subfamily. Pyridoxal 5'-phosphate serves as cofactor.

The enzyme catalyses D-serine = pyruvate + NH4(+). The chain is Probable D-serine dehydratase from Bacillus mycoides (strain KBAB4) (Bacillus weihenstephanensis).